A 380-amino-acid polypeptide reads, in one-letter code: Pregnancy-associated glycoprotein 1 (380 aa).

Positions 1-15 are cleaved as a signal peptide; the sequence is MKWLVLLGLVAFSEC. Positions 16–53 are cleaved as a propeptide — activation peptide; that stretch reads IVKIPLRRLKTMRNVVSGKNMLNNFLKEHAYSLSQISF. N-linked (GlcNAc...) asparagine glycans are attached at residues Asn57 and Asn74. The 307-residue stretch at 71-377 folds into the Peptidase A1 domain; the sequence is YMGNITIGTP…DRGNDRIGLA (307 aa). The active site involves Asp89. The cysteines at positions 102 and 107 are disulfide-linked. N-linked (GlcNAc...) asparagine glycans are attached at residues Asn125 and Asn182. Cys261 and Cys265 are joined by a disulfide. The active site involves Asp270. An intrachain disulfide couples Cys303 to Cys337.

The protein belongs to the peptidase A1 family. N-Glycosylated; the glycans terminate in either N-acetyl-galactosamine (GalNAc) or N-acetyllactosamine. Terminal GalNAc on Asn-linked glycans is greatly reduced prior to parturition while lactosamine-type N-glycans remain unaltered. As to expression, trophoblast and placental tissue. Produced specifically in the invasive binucleate cells of the placenta. Becomes detectable in maternal serum soon after implantation.

It is found in the secreted. The protein localises to the extracellular space. Functionally, appears to be proteolytically inactive. This chain is Pregnancy-associated glycoprotein 1, found in Bos taurus (Bovine).